Reading from the N-terminus, the 88-residue chain is Elongation factor 1-beta (88 aa).

This sequence belongs to the EF-1-beta/EF-1-delta family.

In terms of biological role, promotes the exchange of GDP for GTP in EF-1-alpha/GDP, thus allowing the regeneration of EF-1-alpha/GTP that could then be used to form the ternary complex EF-1-alpha/GTP/AAtRNA. This Halobacterium salinarum (strain ATCC 29341 / DSM 671 / R1) protein is Elongation factor 1-beta.